The following is a 348-amino-acid chain: MTYNIVALPGDGIGPEILNGSLSLLEIISNKYNFNYQIEHHEFGGASIDTFGEPLTEKTLNACKRADAILLGAIGGPKWTDPNNRPEQGLLKLRKSLNLFANIRPTTVFKGASSLSPLKQERVEGTDLVIVRELTSGIYFGEPRHFNNHEALDSLTYTREEIERIVHVAFKLAASRRGKLTSVDKENVLASSKLWRKVVNEVSQLYPEVTVNHLLVDACSMHLITNPKQFDVIVCENLFGDILSDEASVIPGSLGLSPSASFSNDGPRLYEPIHGSAPDIAGKNVANPFGMILSLAMCLRESLNQPDAADELEQHIYNMIENGQTTADLGGKLNTTDIFEILSQKLNH.

Position 76 to 87 (76 to 87 (GPKWTDPNNRPE)) interacts with NAD(+). Residues R94, R104, R132, and D217 each coordinate substrate. Residues D217, D241, and D245 each contribute to the Mg(2+) site. NAD(+) is bound at residue 275-287 (GSAPDIAGKNVAN).

It belongs to the isocitrate and isopropylmalate dehydrogenases family. LeuB type 1 subfamily. As to quaternary structure, homodimer. Mg(2+) serves as cofactor. Mn(2+) is required as a cofactor.

Its subcellular location is the cytoplasm. The enzyme catalyses (2R,3S)-3-isopropylmalate + NAD(+) = 4-methyl-2-oxopentanoate + CO2 + NADH. It participates in amino-acid biosynthesis; L-leucine biosynthesis; L-leucine from 3-methyl-2-oxobutanoate: step 3/4. In terms of biological role, catalyzes the oxidation of 3-carboxy-2-hydroxy-4-methylpentanoate (3-isopropylmalate) to 3-carboxy-4-methyl-2-oxopentanoate. The product decarboxylates to 4-methyl-2 oxopentanoate. This chain is 3-isopropylmalate dehydrogenase, found in Staphylococcus aureus (strain bovine RF122 / ET3-1).